Here is a 241-residue protein sequence, read N- to C-terminus: Triosephosphate isomerase (241 aa).

9–11 (NWK) lines the substrate pocket. His96 serves as the catalytic Electrophile. The active-site Proton acceptor is Glu165. Substrate-binding positions include Gly171, Ser204, and 225-226 (GG).

Belongs to the triosephosphate isomerase family. Homodimer.

Its subcellular location is the cytoplasm. The catalysed reaction is D-glyceraldehyde 3-phosphate = dihydroxyacetone phosphate. It functions in the pathway carbohydrate biosynthesis; gluconeogenesis. It participates in carbohydrate degradation; glycolysis; D-glyceraldehyde 3-phosphate from glycerone phosphate: step 1/1. In terms of biological role, involved in the gluconeogenesis. Catalyzes stereospecifically the conversion of dihydroxyacetone phosphate (DHAP) to D-glyceraldehyde-3-phosphate (G3P). This chain is Triosephosphate isomerase, found in Picosynechococcus sp. (strain ATCC 27264 / PCC 7002 / PR-6) (Agmenellum quadruplicatum).